Here is a 484-residue protein sequence, read N- to C-terminus: Sorting assembly machinery 50 kDa subunit (484 aa).

It belongs to the SAM50/omp85 family. In terms of assembly, component of the mitochondrial outer membrane sorting assembly machinery (SAM or TOB) complex, which at least consists of SAM35, SAM37 and SAM50. Associates with the mitochondrial contact site and cristae organizing system (MICOS) complex (also known as MINOS or MitOS complex).

The protein resides in the mitochondrion outer membrane. Its function is as follows. Component of the mitochondrial outer membrane sorting assembly machinery (SAM or TOB) complex, which is required for the sorting of proteins with complicated topology, such as beta-barrel proteins, to the mitochondrial outer membrane after import by the TOM complex. The protein is Sorting assembly machinery 50 kDa subunit (SAM50) of Saccharomyces cerevisiae (strain ATCC 204508 / S288c) (Baker's yeast).